Here is a 115-residue protein sequence, read N- to C-terminus: Large ribosomal subunit protein uL24 (115 aa).

Belongs to the universal ribosomal protein uL24 family. Part of the 50S ribosomal subunit.

One of two assembly initiator proteins, it binds directly to the 5'-end of the 23S rRNA, where it nucleates assembly of the 50S subunit. In terms of biological role, one of the proteins that surrounds the polypeptide exit tunnel on the outside of the subunit. The sequence is that of Large ribosomal subunit protein uL24 from Aster yellows witches'-broom phytoplasma (strain AYWB).